Reading from the N-terminus, the 541-residue chain is Propionyl-CoA carboxylase beta chain, mitochondrial (541 aa).

The N-terminal 28 residues, 1–28 (MAAVIRIRAMAAGTRLRVLNCGLGTTIR), are a transit peptide targeting the mitochondrion. Residues 34 to 292 (PVSVNERIEN…SNQDPASIRE (259 aa)) form the CoA carboxyltransferase N-terminal domain. Residues 34-535 (PVSVNERIEN…SKKVHRPWRK (502 aa)) are carboxyltransferase. Ser73 bears the Phosphoserine mark. At Lys101 the chain carries N6-acetyllysine; alternate. Lys101 carries the N6-succinyllysine; alternate modification. Residue Lys250 is modified to N6-succinyllysine. The CoA carboxyltransferase C-terminal domain maps to 296–535 (PSDRLVPELD…SKKVHRPWRK (240 aa)). Residues 327 to 360 (DEREFFEIMPNYAKNIVIGFARMNGRTVGIVGNQ) are acyl-CoA binding. Residues Lys476 and Lys491 each carry the N6-acetyllysine; alternate modification. N6-succinyllysine; alternate is present on residues Lys476 and Lys491.

This sequence belongs to the AccD/PCCB family. As to quaternary structure, the holoenzyme is a dodecamer composed of 6 PCCA/alpha subunits and 6 PCCB/beta subunits.

The protein resides in the mitochondrion matrix. The catalysed reaction is propanoyl-CoA + hydrogencarbonate + ATP = (S)-methylmalonyl-CoA + ADP + phosphate + H(+). It carries out the reaction butanoyl-CoA + hydrogencarbonate + ATP = (2S)-ethylmalonyl-CoA + ADP + phosphate + H(+). It functions in the pathway metabolic intermediate metabolism; propanoyl-CoA degradation; succinyl-CoA from propanoyl-CoA: step 1/3. In terms of biological role, this is one of the 2 subunits of the biotin-dependent propionyl-CoA carboxylase (PCC), a mitochondrial enzyme involved in the catabolism of odd chain fatty acids, branched-chain amino acids isoleucine, threonine, methionine, and valine and other metabolites. Propionyl-CoA carboxylase catalyzes the carboxylation of propionyl-CoA/propanoyl-CoA to D-methylmalonyl-CoA/(S)-methylmalonyl-CoA. Within the holoenzyme, the alpha subunit catalyzes the ATP-dependent carboxylation of the biotin carried by the biotin carboxyl carrier (BCC) domain, while the beta subunit then transfers the carboxyl group from carboxylated biotin to propionyl-CoA. Propionyl-CoA carboxylase also significantly acts on butyryl-CoA/butanoyl-CoA, which is converted to ethylmalonyl-CoA/(2S)-ethylmalonyl-CoA. Other alternative minor substrates include (2E)-butenoyl-CoA/crotonoyl-CoA. The protein is Propionyl-CoA carboxylase beta chain, mitochondrial of Rattus norvegicus (Rat).